A 135-amino-acid polypeptide reads, in one-letter code: uncharacterized protein (135 aa).

Residues 13 to 129 enclose the Response regulatory domain; that stretch reads QVLIAENSRF…KILEKVNAAI (117 aa). Aspartate 64 is subject to 4-aspartylphosphate.

This is an uncharacterized protein from Leptospira interrogans serogroup Icterohaemorrhagiae serovar copenhageni (strain Fiocruz L1-130).